The primary structure comprises 78 residues: FXYD domain-containing ion transport regulator 7 (78 aa).

Residues methionine 1–threonine 22 lie on the Extracellular side of the membrane. Residues threonine 3 and threonine 7 are each glycosylated (O-linked (GlcNAc) threonine). Residues valine 23 to leucine 43 traverse the membrane as a helical segment. Residues serine 44–valine 78 lie on the Cytoplasmic side of the membrane. A disordered region spans residues alanine 52 to valine 78. Serine 71 carries the phosphoserine modification.

Belongs to the FXYD family. As to quaternary structure, regulatory subunit of the sodium/potassium-transporting ATPase which is composed of a catalytic alpha subunit, a non-catalytic beta subunit and an additional regulatory subunit. The regulatory subunit, a member of the FXYD protein family, modulates the enzymatic activity in a tissue- and isoform-specific way by changing affinities of the Na+/K+-ATPase toward Na(+), K(+) or ATP. In terms of processing, O-glycosylated; required for stabilization and translocation to the plasma membrane.

The protein resides in the cell membrane. Functionally, associates with and regulates the activity of the sodium/potassium-transporting ATPase (NKA) which catalyzes the hydrolysis of ATP coupled with the exchange of Na(+) and K(+) ions across the plasma membrane. Reduces the apparent affinity for external K(+), an effect that depends on the presence of external Na(+) and voltage. Increases the apparent affinity for intracellular Na(+). This chain is FXYD domain-containing ion transport regulator 7 (FXYD7), found in Bos taurus (Bovine).